A 446-amino-acid polypeptide reads, in one-letter code: tRNA-2-methylthio-N(6)-dimethylallyladenosine synthase (446 aa).

Positions 3–120 (KKLFIETHGC…LPEMIDAARS (118 aa)) constitute an MTTase N-terminal domain. [4Fe-4S] cluster contacts are provided by cysteine 12, cysteine 49, cysteine 83, cysteine 157, cysteine 161, and cysteine 164. Residues 143–375 (RVDGPTAFVS…QSRIHQQGYE (233 aa)) form the Radical SAM core domain. The region spanning 378 to 442 (RRMVGSTQRI…PHSLRGTLID (65 aa)) is the TRAM domain.

It belongs to the methylthiotransferase family. MiaB subfamily. As to quaternary structure, monomer. Requires [4Fe-4S] cluster as cofactor.

It localises to the cytoplasm. It carries out the reaction N(6)-dimethylallyladenosine(37) in tRNA + (sulfur carrier)-SH + AH2 + 2 S-adenosyl-L-methionine = 2-methylsulfanyl-N(6)-dimethylallyladenosine(37) in tRNA + (sulfur carrier)-H + 5'-deoxyadenosine + L-methionine + A + S-adenosyl-L-homocysteine + 2 H(+). In terms of biological role, catalyzes the methylthiolation of N6-(dimethylallyl)adenosine (i(6)A), leading to the formation of 2-methylthio-N6-(dimethylallyl)adenosine (ms(2)i(6)A) at position 37 in tRNAs that read codons beginning with uridine. In Pseudomonas aeruginosa (strain UCBPP-PA14), this protein is tRNA-2-methylthio-N(6)-dimethylallyladenosine synthase.